The chain runs to 230 residues: Cytidylate kinase (230 aa).

11–19 (GPAAAGKST) serves as a coordination point for ATP.

Belongs to the cytidylate kinase family. Type 1 subfamily.

It localises to the cytoplasm. It carries out the reaction CMP + ATP = CDP + ADP. The enzyme catalyses dCMP + ATP = dCDP + ADP. This is Cytidylate kinase from Oceanobacillus iheyensis (strain DSM 14371 / CIP 107618 / JCM 11309 / KCTC 3954 / HTE831).